The chain runs to 126 residues: Methylglyoxal synthase (126 aa).

One can recognise an MGS-like domain in the interval 1–126; the sequence is MADRKCLALI…AEQLIDFRRN (126 aa). Substrate-binding positions include His12, Lys16, 38 to 41, and 59 to 60; these read TGTT and SG. The Proton donor/acceptor role is filled by Asp65. His92 is a binding site for substrate.

It belongs to the methylglyoxal synthase family.

It carries out the reaction dihydroxyacetone phosphate = methylglyoxal + phosphate. Its function is as follows. Catalyzes the formation of methylglyoxal from dihydroxyacetone phosphate. The sequence is that of Methylglyoxal synthase from Rhizobium meliloti (strain 1021) (Ensifer meliloti).